A 400-amino-acid polypeptide reads, in one-letter code: Argininosuccinate synthase (400 aa).

ATP contacts are provided by residues alanine 10–serine 18 and alanine 38. An L-citrulline-binding site is contributed by tyrosine 89. ATP is bound at residue glycine 119. L-aspartate contacts are provided by threonine 121, asparagine 125, and aspartate 126. L-citrulline is bound at residue asparagine 125. L-citrulline is bound by residues arginine 129, serine 177, serine 186, glutamate 262, and tyrosine 274.

The protein belongs to the argininosuccinate synthase family. Type 1 subfamily. Homotetramer.

The protein resides in the cytoplasm. It catalyses the reaction L-citrulline + L-aspartate + ATP = 2-(N(omega)-L-arginino)succinate + AMP + diphosphate + H(+). Its pathway is amino-acid biosynthesis; L-arginine biosynthesis; L-arginine from L-ornithine and carbamoyl phosphate: step 2/3. This chain is Argininosuccinate synthase, found in Trichormus variabilis (strain ATCC 29413 / PCC 7937) (Anabaena variabilis).